Here is a 569-residue protein sequence, read N- to C-terminus: Zinc finger and BTB domain-containing protein 7A (569 aa).

A BTB domain is found at 34-101 (CDVVILVEGR…AYTATLTVST (68 aa)). The interval 214-304 (YGPGPPADRP…LSGAAEGEDG (91 aa)) is disordered. Residues 275-569 (EEEAAALSEA…VATAEGNFAT (295 aa)) form a mediates interaction with KHDRBS1 region. Over residues 279–288 (AALSEAAPEP) the composition is skewed to low complexity. Phosphoserine is present on residues serine 331 and serine 335. The tract at residues 343-569 (MDYYLKYFSG…VATAEGNFAT (227 aa)) is mediates interaction with RELA. The mediates interaction with SMAD4 stretch occupies residues 371–569 (RAKAFQKCPI…VATAEGNFAT (199 aa)). 2 consecutive C2H2-type zinc fingers follow at residues 376-398 (QKCPICEKVIQGAGKLPRHIRTH) and 404-426 (YECNICKVRFTRQDKLKVHMRKH). Residue lysine 430 forms a Glycyl lysine isopeptide (Lys-Gly) (interchain with G-Cter in SUMO2) linkage. A C2H2-type 3 zinc finger spans residues 432–454 (YLCQQCGAAFAHNYDLKNHMRVH). The C2H2-type 4; atypical zinc-finger motif lies at 460 to 484 (YQCDSCCKTFVRSDHLHRHLKKDGC). The interval 480 to 569 (KKDGCNGVPS…VATAEGNFAT (90 aa)) is disordered. Over residues 498–519 (RGVPPDVPAGAGAPPGLPDAPR) the composition is skewed to low complexity. Lysine 527 is covalently cross-linked (Glycyl lysine isopeptide (Lys-Gly) (interchain with G-Cter in SUMO2)). A Phosphoserine modification is found at serine 537. Positions 548–557 (GSGGDDGAGG) are enriched in gly residues.

Homodimer. Interacts with BCL6. Interacts with RELA; involved in the control by RELA of the accessibility of target gene promoters. Interacts with AR (via NR LBD domain); the interaction is direct and androgen-dependent. Interacts with NCOR1. Interacts with NCOR2. Interacts with SMAD4; the interaction is direct and stimulated by TGFB1. Interacts with HDAC1. Interacts with SP1; ZBTB7A prevents the binding to GC-rich motifs in promoters and represses the transcriptional activity of SP1. Interacts with the DNA-dependent protein kinase complex/DNA-PKc. Interacts with KHDRBS1; negatively regulates KHDRBS1 splicing activity. Sumoylated. Undergoes sumoylation with SUMO1 that may regulate its transcriptional activity. In terms of tissue distribution, widely expressed. In normal thymus, expressed in medullary epithelial cells and Hassle's corpuscles (at protein level). In the spleen, mainly expressed in the white pulp germinal centers (at protein level). Up-regulated in thymic lymphomas.

The protein localises to the nucleus. Transcription factor that represses the transcription of a wide range of genes involved in cell proliferation and differentiation. Directly and specifically binds to the consensus sequence 5'-[GA][CA]GACCCCCCCCC-3' and represses transcription both by regulating the organization of chromatin and through the direct recruitment of transcription factors to gene regulatory regions. Negatively regulates SMAD4 transcriptional activity in the TGF-beta signaling pathway through these two mechanisms. That is, recruits the chromatin regulator HDAC1 to the SMAD4-DNA complex and in parallel prevents the recruitment of the transcriptional activators CREBBP and EP300. Collaborates with transcription factors like RELA to modify the accessibility of gene transcription regulatory regions to secondary transcription factors. Also directly interacts with transcription factors like SP1 to prevent their binding to DNA. Functions as an androgen receptor/AR transcriptional corepressor by recruiting NCOR1 and NCOR2 to the androgen response elements/ARE on target genes. Thereby, negatively regulates androgen receptor signaling and androgen-induced cell proliferation. Involved in the switch between fetal and adult globin expression during erythroid cells maturation. Through its interaction with the NuRD complex regulates chromatin at the fetal globin genes to repress their transcription. Specifically represses the transcription of the tumor suppressor ARF isoform from the CDKN2A gene. Efficiently abrogates E2F1-dependent CDKN2A transactivation. Regulates chondrogenesis through the transcriptional repression of specific genes via a mechanism that also requires histone deacetylation. Regulates cell proliferation through the transcriptional regulation of genes involved in glycolysis. Involved in adipogenesis through the regulation of genes involved in adipocyte differentiation. Plays a key role in the differentiation of lymphoid progenitors into B and T lineages. Promotes differentiation towards the B lineage by inhibiting the T-cell instructive Notch signaling pathway through the specific transcriptional repression of Notch downstream target genes. Also regulates osteoclast differentiation. May also play a role, independently of its transcriptional activity, in double-strand break repair via classical non-homologous end joining/cNHEJ. Recruited to double-strand break sites on damage DNA, interacts with the DNA-dependent protein kinase complex and directly regulates its stability and activity in DNA repair. May also modulate the splicing activity of KHDRBS1 toward BCL2L1 in a mechanism which is histone deacetylase-dependent and thereby negatively regulates the pro-apoptotic effect of KHDRBS1. This is Zinc finger and BTB domain-containing protein 7A from Mus musculus (Mouse).